A 304-amino-acid chain; its full sequence is Ornithine carbamoyltransferase (304 aa).

Residues 47 to 50 (STRT), R98, and 125 to 128 (HPCQ) each bind carbamoyl phosphate. Residues N156, D221, and 225–226 (SM) each bind L-ornithine. Carbamoyl phosphate contacts are provided by residues 262 to 263 (CL) and R290.

The protein belongs to the aspartate/ornithine carbamoyltransferase superfamily. OTCase family.

It localises to the cytoplasm. The enzyme catalyses carbamoyl phosphate + L-ornithine = L-citrulline + phosphate + H(+). The protein operates within amino-acid biosynthesis; L-arginine biosynthesis; L-arginine from L-ornithine and carbamoyl phosphate: step 1/3. Functionally, reversibly catalyzes the transfer of the carbamoyl group from carbamoyl phosphate (CP) to the N(epsilon) atom of ornithine (ORN) to produce L-citrulline. This chain is Ornithine carbamoyltransferase, found in Methanococcus maripaludis (strain C5 / ATCC BAA-1333).